The primary structure comprises 511 residues: Bifunctional purine biosynthesis protein PurH (511 aa).

Residues M1–V145 form the MGS-like domain.

Belongs to the PurH family.

It catalyses the reaction (6R)-10-formyltetrahydrofolate + 5-amino-1-(5-phospho-beta-D-ribosyl)imidazole-4-carboxamide = 5-formamido-1-(5-phospho-D-ribosyl)imidazole-4-carboxamide + (6S)-5,6,7,8-tetrahydrofolate. The enzyme catalyses IMP + H2O = 5-formamido-1-(5-phospho-D-ribosyl)imidazole-4-carboxamide. It participates in purine metabolism; IMP biosynthesis via de novo pathway; 5-formamido-1-(5-phospho-D-ribosyl)imidazole-4-carboxamide from 5-amino-1-(5-phospho-D-ribosyl)imidazole-4-carboxamide (10-formyl THF route): step 1/1. It functions in the pathway purine metabolism; IMP biosynthesis via de novo pathway; IMP from 5-formamido-1-(5-phospho-D-ribosyl)imidazole-4-carboxamide: step 1/1. The chain is Bifunctional purine biosynthesis protein PurH from Bacillus anthracis (strain A0248).